A 251-amino-acid chain; its full sequence is Octanoyltransferase (251 aa).

The BPL/LPL catalytic domain occupies 29–216 (GVIQDTLLLL…NFGFIFKEQV (188 aa)). Substrate-binding positions include 74–81 (RGGDVTFH), 146–148 (AIG), and 159–161 (GFA). C177 (acyl-thioester intermediate) is an active-site residue.

Belongs to the LipB family.

The protein localises to the cytoplasm. The enzyme catalyses octanoyl-[ACP] + L-lysyl-[protein] = N(6)-octanoyl-L-lysyl-[protein] + holo-[ACP] + H(+). It functions in the pathway protein modification; protein lipoylation via endogenous pathway; protein N(6)-(lipoyl)lysine from octanoyl-[acyl-carrier-protein]: step 1/2. Functionally, catalyzes the transfer of endogenously produced octanoic acid from octanoyl-acyl-carrier-protein onto the lipoyl domains of lipoate-dependent enzymes. Lipoyl-ACP can also act as a substrate although octanoyl-ACP is likely to be the physiological substrate. The chain is Octanoyltransferase from Koribacter versatilis (strain Ellin345).